The chain runs to 667 residues: uncharacterized protein (667 aa).

Residues Ala321–Lys345 are disordered. In terms of domain architecture, Helicase ATP-binding spans Glu375–Ala552. Residue Ala388–Thr395 coordinates ATP. Residues Asp498–His501 carry the DEAH box motif.

Belongs to the helicase family. Yeast subtelomeric Y' repeat subfamily.

This is an uncharacterized protein from Saccharomyces cerevisiae (strain ATCC 204508 / S288c) (Baker's yeast).